The following is a 401-amino-acid chain: ATP-dependent RNA helicase eIF4A (401 aa).

Residues 28-56 (DNFDDMKLKGELLRGIYAYGFERPSAIQQ) carry the Q motif motif. The Helicase ATP-binding domain maps to 59–229 (IMPIVTGRDC…KKFMRDPIRI (171 aa)). Residue 72-79 (AQSGTGKT) coordinates ATP. Residues 177–180 (DEAD) carry the DEAD box motif. A Helicase C-terminal domain is found at 240–401 (GIRQFYINVE…EMPLNVADLI (162 aa)).

The protein belongs to the DEAD box helicase family. eIF4A subfamily. In terms of assembly, component of the eIF4F complex, which composition varies with external and internal environmental conditions. It is composed of at least eIF4A, eIF4E and eIF4G.

It is found in the cytoplasm. The enzyme catalyses ATP + H2O = ADP + phosphate + H(+). ATP-dependent RNA helicase which is a subunit of the eIF4F complex involved in cap recognition and is required for mRNA binding to ribosome. In the current model of translation initiation, eIF4A unwinds RNA secondary structures in the 5'-UTR of mRNAs which is necessary to allow efficient binding of the small ribosomal subunit, and subsequent scanning for the initiator codon. The sequence is that of ATP-dependent RNA helicase eIF4A (TIF1) from Cryptococcus neoformans var. neoformans serotype D (strain B-3501A) (Filobasidiella neoformans).